Reading from the N-terminus, the 1052-residue chain is Eukaryotic translation initiation factor 3 subunit A (1052 aa).

In terms of domain architecture, PCI spans 325–505 (IQYAASAVLL…GSLHFNNNIF (181 aa)). Coiled-coil stretches lie at residues 568–712 (REHV…RLRE) and 769–882 (EKTA…SAQT). 2 stretches are compositionally biased toward basic and acidic residues: residues 570–600 (HVSN…EQMQ) and 793–874 (KIRL…EQEK). 2 disordered regions span residues 570–606 (HVSN…HQNQ) and 793–1052 (KIRL…DDKN). 2 stretches are compositionally biased toward polar residues: residues 875 to 887 (LSNL…QPTW) and 895 to 906 (APTTAAPSSMRV). Basic and acidic residues-rich tracts occupy residues 942-952 (DRGDRAPRDTG), 960-970 (DRGDRAPRDTG), 979-1013 (RAPR…ERRA), and 1037-1052 (GSER…DDKN).

This sequence belongs to the eIF-3 subunit A family. Component of the eukaryotic translation initiation factor 3 (eIF-3) complex.

The protein resides in the cytoplasm. Functionally, RNA-binding component of the eukaryotic translation initiation factor 3 (eIF-3) complex, which is involved in protein synthesis of a specialized repertoire of mRNAs and, together with other initiation factors, stimulates binding of mRNA and methionyl-tRNAi to the 40S ribosome. The eIF-3 complex specifically targets and initiates translation of a subset of mRNAs involved in cell proliferation. This is Eukaryotic translation initiation factor 3 subunit A from Monosiga brevicollis (Choanoflagellate).